Reading from the N-terminus, the 312-residue chain is MMGRRNDTNVADFILTGLSDSEEVQMALFMLFLLIYLITMLGNVGMLLIIRLDLQLHTPMYFFLTHLSFIDLSYSTVVTPKTLANLLTSNYISFTGCFAQMFCFVFLGTAECYLLSSMAYDRYAAICSPLHYTVIMPKRLCLALITGPYVIGFMDSFVNVVSMSRLHFCDSNIIHHFFCDTSPILALSCTDTDNTEMLIFIIAGSTLMVSLITISASYVSILSTILKINSTSGKQKAFSTCVSHLLGVTIFYGTMIFTYLKPRKSYSLGRDQVAPVFYTIVIPMLNPLIYSLRNREVKNALIRVMQRRQDSR.

Over 1 to 26 (MMGRRNDTNVADFILTGLSDSEEVQM) the chain is Extracellular. Residue Asn-6 is glycosylated (N-linked (GlcNAc...) asparagine). Residues 27–47 (ALFMLFLLIYLITMLGNVGML) form a helical membrane-spanning segment. At 48 to 55 (LIIRLDLQ) the chain is on the cytoplasmic side. The helical transmembrane segment at 56–76 (LHTPMYFFLTHLSFIDLSYST) threads the bilayer. The Extracellular segment spans residues 77–99 (VVTPKTLANLLTSNYISFTGCFA). An intrachain disulfide couples Cys-97 to Cys-189. The helical transmembrane segment at 100–120 (QMFCFVFLGTAECYLLSSMAY) threads the bilayer. Residues 121–139 (DRYAAICSPLHYTVIMPKR) are Cytoplasmic-facing. A helical transmembrane segment spans residues 140–160 (LCLALITGPYVIGFMDSFVNV). At 161 to 197 (VSMSRLHFCDSNIIHHFFCDTSPILALSCTDTDNTEM) the chain is on the extracellular side. A helical membrane pass occupies residues 198–217 (LIFIIAGSTLMVSLITISAS). Topologically, residues 218 to 237 (YVSILSTILKINSTSGKQKA) are cytoplasmic. Residues 238-258 (FSTCVSHLLGVTIFYGTMIFT) traverse the membrane as a helical segment. The Extracellular segment spans residues 259 to 271 (YLKPRKSYSLGRD). The chain crosses the membrane as a helical span at residues 272–292 (QVAPVFYTIVIPMLNPLIYSL). Over 293-312 (RNREVKNALIRVMQRRQDSR) the chain is Cytoplasmic.

This sequence belongs to the G-protein coupled receptor 1 family.

It is found in the cell membrane. Odorant receptor. This is Olfactory receptor 8H3 (OR8H3) from Homo sapiens (Human).